We begin with the raw amino-acid sequence, 802 residues long: Xylanase/beta-glucanase (802 aa).

Residues 1 to 31 (MKKSIFKRYAAAVGLMASVLMFTAVPTTSNA) form the signal peptide. The region spanning 32-239 (ADDQKTGKVG…SNGSANVKSI (208 aa)) is the GH11 domain. Glu124 (nucleophile) is an active-site residue. Glu226 functions as the Proton donor in the catalytic mechanism. The segment at 245–523 (IDIPDPEPIK…SYLEGHDPSK (279 aa)) is b. The 147-residue stretch at 258-404 (NGYYLKENFE…YMDGAYAGVK (147 aa)) folds into the CBM-cenC domain. Disordered stretches follow at residues 414–436 (SQSV…PSVT) and 533–564 (TTTT…YRDL). Composition is skewed to low complexity over residues 419-436 (PPVT…PSVT) and 533-553 (TTTT…TTTT). Residues 434–513 (SVTKWGDANC…LIRAISELPE (80 aa)) enclose the Dockerin domain. Residues 524 to 555 (TTTTTTRITTTTTTTTTTTTSKTTTTTTTTSP) are linker. Positions 556-792 (AMHGGYRDLG…WVTYNKNGVQ (237 aa)) constitute a GH16 domain. Residue Glu684 is the Nucleophile of the active site.

The protein in the N-terminal section; belongs to the glycosyl hydrolase 11 (cellulase G) family. This sequence in the C-terminal section; belongs to the glycosyl hydrolase 16 family.

It catalyses the reaction Endohydrolysis of (1-&gt;4)-beta-D-xylosidic linkages in xylans.. The enzyme catalyses Hydrolysis of (1-&gt;4)-beta-D-glucosidic linkages in beta-D-glucans containing (1-&gt;3)- and (1-&gt;4)-bonds.. It participates in glycan degradation; xylan degradation. In terms of biological role, contains two catalytic domains with xylanase and endo-beta-1,3-1,4 glucanase activities. The sequence is that of Xylanase/beta-glucanase (xynD) from Ruminococcus flavefaciens.